A 409-amino-acid chain; its full sequence is Adenosine receptor A2a (409 aa).

At 1-4 the chain is on the extracellular side; sequence MSSS. The helical transmembrane segment at 5–29 threads the bilayer; the sequence is VYITVELVIAVLAILGNVLVCWAVW. The Cytoplasmic segment spans residues 30-39; sequence INSNLQNVTN. The helical transmembrane segment at 40–63 threads the bilayer; the sequence is YFVVSLAAADIAVGVLAIPFAITI. Residues 64-74 lie on the Extracellular side of the membrane; the sequence is STGFCAACHGC. Intrachain disulfides connect cysteine 68-cysteine 156, cysteine 71-cysteine 143, and cysteine 74-cysteine 163. A helical membrane pass occupies residues 75-97; it reads LFFACFVLVLTQSSIFSLLTITI. The Cytoplasmic segment spans residues 98 to 117; it reads DRYIAIRIPLRYNGLVTCTR. Residues 118-140 traverse the membrane as a helical segment; the sequence is AKGIIAICWVLSFAIGLTPMLGW. The Extracellular portion of the chain corresponds to 141 to 170; that stretch reads NNCSQPKGDKNHSESCDEGQVTCLFEDVVP. N-linked (GlcNAc...) asparagine glycans are attached at residues asparagine 142 and asparagine 151. Glutamate 166 lines the adenosine pocket. The helical transmembrane segment at 171 to 195 threads the bilayer; the sequence is MNYMVYYNFFAFVLVPLLLMLGIYL. Topologically, residues 196 to 231 are cytoplasmic; sequence RIFLAARRQLKQMESQPLPGERTRSTLQKEVHPAKS. A helical transmembrane segment spans residues 232-255; that stretch reads LAIIVGLFALCCLPLNIINCFTFF. Asparagine 250 contributes to the adenosine binding site. Cysteine 256 and cysteine 259 are joined by a disulfide. Residues 256–263 are Extracellular-facing; that stretch reads CPECDHAP. The chain crosses the membrane as a helical span at residues 264–287; the sequence is PWLMYLTIILSHGNSVVNPLIYAY. Adenosine is bound by residues serine 274 and histidine 275. Over 288 to 409 the chain is Cytoplasmic; that stretch reads RIREFRQTFR…PPAHGGAGVS (122 aa). Disordered regions lie at residues 316 to 336 and 369 to 409; these read TSARASAAHSPEGEQVSLRLN and QRSH…AGVS.

Belongs to the G-protein coupled receptor 1 family. Interacts (via cytoplasmic C-terminal domain) with USP4; the interaction is direct. May interact with DRD4. Interacts with NECAB2. Interacts (via cytoplasmic C-terminal domain) with GAS2L2; interaction enhances receptor-mediated adenylyl cyclase activity. Ubiquitinated. Deubiquitinated by USP4; leading to stabilization and expression at the cell surface.

The protein resides in the cell membrane. Its function is as follows. Receptor for adenosine. The activity of this receptor is mediated by G proteins which activate adenylyl cyclase. This is Adenosine receptor A2a (ADORA2A) from Cavia porcellus (Guinea pig).